Here is a 153-residue protein sequence, read N- to C-terminus: UPF0756 membrane protein Bcer98_3279 (153 aa).

Transmembrane regions (helical) follow at residues 8–28 (FLFI…IVAI), 54–74 (LGVT…EIGF), 87–107 (WIAL…LQLL), and 117–137 (LVFG…GPLI).

The protein belongs to the UPF0756 family.

It localises to the cell membrane. This chain is UPF0756 membrane protein Bcer98_3279, found in Bacillus cytotoxicus (strain DSM 22905 / CIP 110041 / 391-98 / NVH 391-98).